We begin with the raw amino-acid sequence, 57 residues long: MPLIQPPLYLTFLLLMLLYRIITLYVWSLSTITYKTSVRHASLYQRSFFRWSVDHSL.

Residues 1-8 (MPLIQPPL) lie on the Virion surface side of the membrane. The chain crosses the membrane as a helical span at residues 9–29 (YLTFLLLMLLYRIITLYVWSL). Residues 30 to 57 (STITYKTSVRHASLYQRSFFRWSVDHSL) are Intravirion-facing.

The protein belongs to the rubulavirus small hydrophobic protein family. Interacts with host TNFRSF1A, RIPK1 and IRAK1; these interactions interfere with host NF-kappa-B activation at the level of receptor complexes. Interacts with host protein UBQLN4.

It is found in the virion membrane. The protein localises to the host cell membrane. In terms of biological role, plays a role in the inhibition of the host NF-kappa-B pathway. This inhibition occurs at the receptor level, by preventing the signaling of TNFR1 as well as IL-1R and TLR3. The sequence is that of Small hydrophobic protein (SH) from Homo sapiens (Human).